The primary structure comprises 103 residues: Cyanovirin-N homolog (103 aa).

It belongs to the cyanovirin-N family.

Mannose-binding lectin. This chain is Cyanovirin-N homolog, found in Tuber borchii (White truffle).